A 137-amino-acid polypeptide reads, in one-letter code: Small ribosomal subunit protein uS9 (137 aa).

Over residues Leu105–Ala117 the composition is skewed to basic and acidic residues. Positions Leu105 to Arg137 are disordered. Positions Lys118–Arg137 are enriched in basic residues.

Belongs to the universal ribosomal protein uS9 family.

The chain is Small ribosomal subunit protein uS9 from Cyanothece sp. (strain PCC 7425 / ATCC 29141).